Reading from the N-terminus, the 90-residue chain is DNA-directed RNA polymerase subunit omega (90 aa).

Belongs to the RNA polymerase subunit omega family. The RNAP catalytic core consists of 2 alpha, 1 beta, 1 beta' and 1 omega subunit. When a sigma factor is associated with the core the holoenzyme is formed, which can initiate transcription.

The catalysed reaction is RNA(n) + a ribonucleoside 5'-triphosphate = RNA(n+1) + diphosphate. Promotes RNA polymerase assembly. Latches the N- and C-terminal regions of the beta' subunit thereby facilitating its interaction with the beta and alpha subunits. The chain is DNA-directed RNA polymerase subunit omega from Rhodopirellula baltica (strain DSM 10527 / NCIMB 13988 / SH1).